Here is a 193-residue protein sequence, read N- to C-terminus: Adenylate kinase (193 aa).

ATP is bound at residue 11–16 (GSGKGT). Residues 31-60 (STGDIFRANVKGETPLGLEAKKYMDAGDYV) form an NMP region. AMP contacts are provided by residues T32, R37, 58–60 (DYV), 86–89 (GYPR), and Q93. The interval 127-137 (GRAKESGRSDD) is LID. R128 contacts ATP. R134 and R145 together coordinate AMP. G173 is an ATP binding site.

Belongs to the adenylate kinase family. Monomer.

The protein resides in the cytoplasm. It carries out the reaction AMP + ATP = 2 ADP. The protein operates within purine metabolism; AMP biosynthesis via salvage pathway; AMP from ADP: step 1/1. Catalyzes the reversible transfer of the terminal phosphate group between ATP and AMP. Plays an important role in cellular energy homeostasis and in adenine nucleotide metabolism. This chain is Adenylate kinase, found in Renibacterium salmoninarum (strain ATCC 33209 / DSM 20767 / JCM 11484 / NBRC 15589 / NCIMB 2235).